A 169-amino-acid polypeptide reads, in one-letter code: Small ribosomal subunit protein uS5 (169 aa).

Positions 15–79 (LKEQVVAINR…EAAKKNLRRI (65 aa)) constitute an S5 DRBM domain.

It belongs to the universal ribosomal protein uS5 family. As to quaternary structure, part of the 30S ribosomal subunit. Contacts proteins S4 and S8.

With S4 and S12 plays an important role in translational accuracy. Functionally, located at the back of the 30S subunit body where it stabilizes the conformation of the head with respect to the body. The chain is Small ribosomal subunit protein uS5 from Solibacter usitatus (strain Ellin6076).